A 351-amino-acid polypeptide reads, in one-letter code: Phenylalanine--tRNA ligase alpha subunit (351 aa).

Glutamate 276 lines the Mg(2+) pocket.

This sequence belongs to the class-II aminoacyl-tRNA synthetase family. Phe-tRNA synthetase alpha subunit type 1 subfamily. In terms of assembly, tetramer of two alpha and two beta subunits. It depends on Mg(2+) as a cofactor.

The protein resides in the cytoplasm. The catalysed reaction is tRNA(Phe) + L-phenylalanine + ATP = L-phenylalanyl-tRNA(Phe) + AMP + diphosphate + H(+). In Psychrobacter arcticus (strain DSM 17307 / VKM B-2377 / 273-4), this protein is Phenylalanine--tRNA ligase alpha subunit.